Here is a 481-residue protein sequence, read N- to C-terminus: Mediator of RNA polymerase II transcription subunit 3 (481 aa).

Positions 79–107 form a coiled coil; the sequence is QEKFQMIRSKVLGLTERLQELSNDFEELQ. 2 disordered regions span residues 140–261 and 415–463; these read AGAS…MGTP and NTKG…KSAY. Positions 148 to 203 are enriched in low complexity; sequence TPTPAAATPTTAPTPGAGTKKAAKTAPTPTATATIGTPSNNAPTPATTATTPGTQA. A compositionally biased stretch (basic residues) spans 204-213; that stretch reads KKPRKPRQTK. Over residues 214 to 248 the composition is skewed to low complexity; that stretch reads KQQQAAAAAAAVAQAQAQAQAQAQNQNQNNMQNKN. The span at 249–259 shows a compositional bias: polar residues; sequence ISNPGMNSNMG. A compositionally biased stretch (low complexity) spans 428–458; the sequence is MDQNQNQNQSQNQSQNQNQSMNMNMNNDSNN.

This sequence belongs to the Mediator complex subunit 3 family. In terms of assembly, component of the Mediator complex.

The protein resides in the nucleus. Its function is as follows. Component of the Mediator complex, a coactivator involved in regulated gene transcription of nearly all RNA polymerase II-dependent genes. Mediator functions as a bridge to convey information from gene-specific regulatory proteins to the basal RNA polymerase II transcription machinery. Mediator is recruited to promoters by direct interactions with regulatory proteins and serves as a scaffold for the assembly of a functional preinitiation complex with RNA polymerase II and the general transcription factors. The chain is Mediator of RNA polymerase II transcription subunit 3 (PGD1) from Candida glabrata (strain ATCC 2001 / BCRC 20586 / JCM 3761 / NBRC 0622 / NRRL Y-65 / CBS 138) (Yeast).